The chain runs to 428 residues: Enolase (428 aa).

(2R)-2-phosphoglycerate is bound at residue Q163. E205 acts as the Proton donor in catalysis. 3 residues coordinate Mg(2+): D242, E285, and D312. K337, R366, S367, and K388 together coordinate (2R)-2-phosphoglycerate. The active-site Proton acceptor is the K337.

The protein belongs to the enolase family. It depends on Mg(2+) as a cofactor.

Its subcellular location is the cytoplasm. The protein resides in the secreted. The protein localises to the cell surface. It carries out the reaction (2R)-2-phosphoglycerate = phosphoenolpyruvate + H2O. It participates in carbohydrate degradation; glycolysis; pyruvate from D-glyceraldehyde 3-phosphate: step 4/5. Functionally, catalyzes the reversible conversion of 2-phosphoglycerate (2-PG) into phosphoenolpyruvate (PEP). It is essential for the degradation of carbohydrates via glycolysis. The sequence is that of Enolase from Nitrosomonas europaea (strain ATCC 19718 / CIP 103999 / KCTC 2705 / NBRC 14298).